The following is a 158-amino-acid chain: Trafficking protein particle complex subunit 6B (158 aa).

The protein belongs to the TRAPP small subunits family. BET3 subfamily. As to quaternary structure, homodimer. Part of a TRAPP complex. Heterodimer with TRAPPC3. The heterodimer TRAPPC6B-TRAPPC3 interacts with TRAPPC1 likely providing a core for TRAPP complex formation.

Its subcellular location is the golgi apparatus. The protein localises to the cis-Golgi network. It is found in the endoplasmic reticulum. In terms of biological role, component of a transport protein particle (TRAPP) complex that may function in specific stages of inter-organelle traffic. Specifically involved in the early development of neural circuitry, likely by controlling the frequency and amplitude of intracellular calcium transients implicated in the regulation of neuron differentiation and survival. This chain is Trafficking protein particle complex subunit 6B, found in Bos taurus (Bovine).